The chain runs to 49 residues: Disintegrin ocellatin (49 aa).

The 47-residue stretch at 1-47 (DCESGPCCDNCKFLKEGTICKMARGDNMHHYCNGKTCDCPRNPYKGE) folds into the Disintegrin domain. Disulfide bonds link cysteine 2–cysteine 11, cysteine 7–cysteine 32, cysteine 8–cysteine 37, and cysteine 20–cysteine 39. The short motif at 24 to 26 (RGD) is the Cell attachment site element.

This sequence belongs to the venom metalloproteinase (M12B) family. P-II subfamily. P-IIa sub-subfamily. As to quaternary structure, monomer. Expressed by the venom gland.

The protein resides in the secreted. In terms of biological role, inhibits ADP-induced human platelet aggregation. The protein is Disintegrin ocellatin of Echis ocellatus (Ocellated saw-scaled viper).